The following is a 123-amino-acid chain: KxDL motif-containing protein LO9-177 (123 aa).

The KxDL signature appears at 78-81; the sequence is KDDL.

This sequence belongs to the KXD1 family. In terms of assembly, homodimer. Component of a nuclear cell elongation controlling complex made of ILI5/BUL1, LO9-177 and BC1. Binds directly to ILI5/BUL1, ILI4/BU1, BUL2 and BUL3. Binds to BC1 in the nucleus. Interacts with BCL1.

It is found in the nucleus. It localises to the cytoplasm. Contributes, together with ILI5/BUL1 and BC1, to the promotion of leaf inclination and grain size by modulating cell elongation. In Oryza sativa subsp. indica (Rice), this protein is KxDL motif-containing protein LO9-177.